A 287-amino-acid chain; its full sequence is Flagellin (287 aa).

This sequence belongs to the bacterial flagellin family.

The protein localises to the secreted. Its subcellular location is the bacterial flagellum. In terms of biological role, flagellin is the subunit protein which polymerizes to form the filaments of bacterial flagella. This Listeria innocua serovar 6a (strain ATCC BAA-680 / CLIP 11262) protein is Flagellin (flaA).